A 278-amino-acid polypeptide reads, in one-letter code: Dermonecrotic toxin LhSicTox-alphaIV1ii (278 aa).

Residue His5 is part of the active site. Mg(2+) contacts are provided by Glu25 and Asp27. His41 serves as the catalytic Nucleophile. 2 disulfide bridges follow: Cys45–Cys51 and Cys47–Cys192. Mg(2+) is bound at residue Asp85.

This sequence belongs to the arthropod phospholipase D family. Class II subfamily. Requires Mg(2+) as cofactor. As to expression, expressed by the venom gland.

The protein resides in the secreted. The catalysed reaction is an N-(acyl)-sphingosylphosphocholine = an N-(acyl)-sphingosyl-1,3-cyclic phosphate + choline. It catalyses the reaction an N-(acyl)-sphingosylphosphoethanolamine = an N-(acyl)-sphingosyl-1,3-cyclic phosphate + ethanolamine. It carries out the reaction a 1-acyl-sn-glycero-3-phosphocholine = a 1-acyl-sn-glycero-2,3-cyclic phosphate + choline. The enzyme catalyses a 1-acyl-sn-glycero-3-phosphoethanolamine = a 1-acyl-sn-glycero-2,3-cyclic phosphate + ethanolamine. Its function is as follows. Dermonecrotic toxins cleave the phosphodiester linkage between the phosphate and headgroup of certain phospholipids (sphingolipid and lysolipid substrates), forming an alcohol (often choline) and a cyclic phosphate. This toxin acts on sphingomyelin (SM). It may also act on ceramide phosphoethanolamine (CPE), lysophosphatidylcholine (LPC) and lysophosphatidylethanolamine (LPE), but not on lysophosphatidylserine (LPS), and lysophosphatidylglycerol (LPG). It acts by transphosphatidylation, releasing exclusively cyclic phosphate products as second products. Induces dermonecrosis, hemolysis, increased vascular permeability, edema, inflammatory response, and platelet aggregation. This is Dermonecrotic toxin LhSicTox-alphaIV1ii from Loxosceles hirsuta (Recluse spider).